The sequence spans 117 residues: Large ribosomal subunit protein bL20c (117 aa).

The protein belongs to the bacterial ribosomal protein bL20 family.

Its subcellular location is the plastid. The protein localises to the chloroplast. In terms of biological role, binds directly to 23S ribosomal RNA and is necessary for the in vitro assembly process of the 50S ribosomal subunit. It is not involved in the protein synthesizing functions of that subunit. The protein is Large ribosomal subunit protein bL20c of Citrus sinensis (Sweet orange).